Reading from the N-terminus, the 228-residue chain is UPF0173 metal-dependent hydrolase LMOf2365_1599 (228 aa).

This sequence belongs to the UPF0173 family.

The protein is UPF0173 metal-dependent hydrolase LMOf2365_1599 of Listeria monocytogenes serotype 4b (strain F2365).